Here is a 102-residue protein sequence, read N- to C-terminus: Signal recognition particle 19 kDa protein (102 aa).

It belongs to the SRP19 family. As to quaternary structure, part of the signal recognition particle protein translocation system, which is composed of SRP and FtsY. Archaeal SRP consists of a 7S RNA molecule of 300 nucleotides and two protein subunits: SRP54 and SRP19.

It localises to the cytoplasm. Involved in targeting and insertion of nascent membrane proteins into the cytoplasmic membrane. Binds directly to 7S RNA and mediates binding of the 54 kDa subunit of the SRP. This Saccharolobus solfataricus (strain ATCC 35092 / DSM 1617 / JCM 11322 / P2) (Sulfolobus solfataricus) protein is Signal recognition particle 19 kDa protein.